The chain runs to 1107 residues: Protein translocase subunit SecA (1107 aa).

ATP contacts are provided by residues Q169, G187–T191, and D688. The span at R1036–A1066 shows a compositional bias: basic and acidic residues. The tract at residues R1036–L1107 is disordered. Zn(2+) contacts are provided by C1091, C1093, C1102, and H1103. Residues K1097–L1107 show a composition bias toward basic residues.

The protein belongs to the SecA family. Monomer and homodimer. Part of the essential Sec protein translocation apparatus which comprises SecA, SecYEG and auxiliary proteins SecDF. Other proteins may also be involved. It depends on Zn(2+) as a cofactor.

The protein resides in the cell inner membrane. It localises to the cytoplasm. The catalysed reaction is ATP + H2O + cellular proteinSide 1 = ADP + phosphate + cellular proteinSide 2.. Part of the Sec protein translocase complex. Interacts with the SecYEG preprotein conducting channel. Has a central role in coupling the hydrolysis of ATP to the transfer of proteins into and across the cell membrane, serving as an ATP-driven molecular motor driving the stepwise translocation of polypeptide chains across the membrane. In Porphyromonas gingivalis (strain ATCC BAA-308 / W83), this protein is Protein translocase subunit SecA.